We begin with the raw amino-acid sequence, 156 residues long: Small ribosomal subunit protein uS7c (156 aa).

The protein belongs to the universal ribosomal protein uS7 family. Part of the 30S ribosomal subunit.

It localises to the plastid. The protein localises to the chloroplast. Functionally, one of the primary rRNA binding proteins, it binds directly to 16S rRNA where it nucleates assembly of the head domain of the 30S subunit. The protein is Small ribosomal subunit protein uS7c (rps7) of Pyropia yezoensis (Susabi-nori).